Here is a 342-residue protein sequence, read N- to C-terminus: Ferredoxin--NADP reductase (342 aa).

The FAD site is built by cysteine 17, aspartate 36, glutamine 44, tyrosine 49, valine 89, phenylalanine 124, aspartate 289, and threonine 330.

The protein belongs to the ferredoxin--NADP reductase type 2 family. Homodimer. It depends on FAD as a cofactor.

The enzyme catalyses 2 reduced [2Fe-2S]-[ferredoxin] + NADP(+) + H(+) = 2 oxidized [2Fe-2S]-[ferredoxin] + NADPH. In Nitrobacter winogradskyi (strain ATCC 25391 / DSM 10237 / CIP 104748 / NCIMB 11846 / Nb-255), this protein is Ferredoxin--NADP reductase.